A 3149-amino-acid polypeptide reads, in one-letter code: Large tegument protein deneddylase (3149 aa).

The span at 1–13 shows a compositional bias: polar residues; the sequence is MSNGDWGQSQRTR. The tract at residues 1–30 is disordered; it reads MSNGDWGQSQRTRGTGPVRGIRTMDVNAPG. The tract at residues 1-268 is deubiquitination activity; that stretch reads MSNGDWGQSQ…YEANGSGFDL (268 aa). Residues 41 to 258 enclose the Peptidase C76 domain; it reads LGTASCNQAH…MLEHYGVYDF (218 aa). Catalysis depends on residues C61, D193, and H195. The interval 319–341 is disordered; that stretch reads PAARYSPAKTNSPPSSPASAAPA. 8 consecutive repeat copies span residues 335 to 339, 340 to 344, 345 to 349, 350 to 354, 355 to 359, 360 to 364, 365 to 369, and 370 to 374. The tract at residues 335-374 is 8 X 5 AA repeats of P-A-S-A-A; that stretch reads PASAAPASAAPASAAPASAAPASAAPASAAPASAAPASAA. Disordered regions lie at residues 382–656, 901–923, 1143–1166, 1412–1434, 1644–1677, 2583–2839, 2852–2981, and 2995–3019; these read FIPI…GSGL, LLSG…SIYR, APIS…TPPL, GRKE…RARE, PEAT…SALW, GLVS…PTAV, AAAS…PGAR, and QTYT…KCKD. Positions 462 to 483 are enriched in pro residues; the sequence is LPPPVIPIPHQSPPASPTPHPA. Composition is skewed to low complexity over residues 509–536 and 544–564; these read AAPS…TTTL and QPPQ…QPTP. Residues 554 to 584 form an interaction with inner tegument protein region; that stretch reads SPLLPQQQPTPSAAPAPSPLLPQQQPPPSAA. Over residues 565–609 the composition is skewed to pro residues; the sequence is SAAPAPSPLLPQQQPPPSAARAPSPLPPQQQPLPSATPAPPPAQQ. Over residues 1143–1155 the composition is skewed to low complexity; the sequence is APISPASPSATPA. Residues 2592–2603 show a composition bias toward polar residues; sequence SADNTPASSDRL. A compositionally biased stretch (pro residues) spans 2711–2720; it reads QPAPQQPPSS. Composition is skewed to polar residues over residues 2734 to 2745 and 2784 to 2804; these read SPHSTPSTASGS and SAAS…SSQD. Positions 2812-2827 are enriched in basic and acidic residues; the sequence is MQREKKQQGGREEAAE. Over residues 2874–2885 the composition is skewed to low complexity; sequence APALGSGLAAPA.

This sequence belongs to the herpesviridae large tegument protein family. As to quaternary structure, interacts with host CUL1 and CUL4A; these interactions inhibit the E3 ligase activity of cullins. Interacts with inner tegument protein. Interacts with capsid vertex specific component CVC2. Interacts with the major capsid protein/MCP. Interacts with host TRIM25 and YWHAZ.

It localises to the virion tegument. The protein resides in the host cytoplasm. The protein localises to the host nucleus. The enzyme catalyses Thiol-dependent hydrolysis of ester, thioester, amide, peptide and isopeptide bonds formed by the C-terminal Gly of ubiquitin (a 76-residue protein attached to proteins as an intracellular targeting signal).. Functionally, large tegument protein that plays multiple roles in the viral cycle. During viral entry, remains associated with the capsid while most of the tegument is detached and participates in the capsid transport toward the host nucleus. Plays a role in the routing of the capsid at the nuclear pore complex and subsequent uncoating. Within the host nucleus, acts as a deneddylase and promotes the degradation of nuclear CRLs (cullin-RING ubiquitin ligases) and thereby stabilizes nuclear CRL substrates, while cytoplasmic CRLs remain unaffected. These modifications prevent host cell cycle S-phase progression and create a favorable environment allowing efficient viral genome replication. Participates later in the secondary envelopment of capsids. Indeed, plays a linker role for the association of the outer viral tegument to the capsids together with the inner tegument protein. Counteracts host TLR-mediated NF-kappa-B activation through both MYD88 and TICAM1-dependent pathways by interfering with 'Lys-63'- and 'Lys-48'-linked ubiquitination of signaling intermediates such as TRAF6 and IKBKG. Inhibits type I interferon production by forming a tri-molecular complex with host TRIM25 and 14-3-3 thereby promoting TRIM25 autoubiquitination and sequestration of the ligase into inactive protein aggregates. In turn, host RIGI is recruited to the complex but ubiquitination is severely impaired leading to inhibition of the pathway. Also catalyzes the removal of 'Lys-48'- and 'Lys-63'-linked ubiquitin chains on host TBK1 and STING1 suppressing cGAS-STING signaling in addition to the RIGI-MAVS pathway. Inhibits selective autophagy by deubiquitinating host SQSTM1. In turn, decreased SQSTM1 ubiquitination fails to recruit LC3 to SQSTM1-positive aggregates. In the host nucleus, deubiquitinates topoisomerase II subunits TOP2A and TOP2B thereby stabilizing SUMOylated TOP2 which halts the DNA damage response to TOP2-induced double strand DNA breaks and promotes cell survival. This chain is Large tegument protein deneddylase, found in Epstein-Barr virus (strain B95-8) (HHV-4).